We begin with the raw amino-acid sequence, 320 residues long: Cytochrome f (320 aa).

Residues 1-35 form the signal peptide; the sequence is MQTRKTFSWIKEEITRSISVLLMIYIITWASISNA. Heme is bound by residues tyrosine 36, cysteine 56, cysteine 59, and histidine 60. Residues 286–306 form a helical membrane-spanning segment; the sequence is VQGLLFFLASVILAQIFLVLK.

The protein belongs to the cytochrome f family. As to quaternary structure, the 4 large subunits of the cytochrome b6-f complex are cytochrome b6, subunit IV (17 kDa polypeptide, petD), cytochrome f and the Rieske protein, while the 4 small subunits are PetG, PetL, PetM and PetN. The complex functions as a dimer. Heme is required as a cofactor.

The protein localises to the plastid. It localises to the chloroplast thylakoid membrane. Component of the cytochrome b6-f complex, which mediates electron transfer between photosystem II (PSII) and photosystem I (PSI), cyclic electron flow around PSI, and state transitions. The protein is Cytochrome f of Manihot esculenta (Cassava).